A 343-amino-acid polypeptide reads, in one-letter code: Polyprenyl transferase spyF (343 aa).

Transmembrane regions (helical) follow at residues 38–58 (WLAVFSGGVSLPILIGNSHPL), 62–82 (VSVWATLLAGANQIATHPASI), 92–112 (LLCLICGYIFCGAGMVWNDWI), 138–158 (GFIWMMVHVAAMIPVTISTIL), 170–190 (LYIYPQYFLGFSLAWPGAIGW), 241–261 (AYVAAGSRIHMFLVILAGLVL), 273–293 (SGWLWASWMCVWALSFVHQLL), and 311–331 (FALGVWTIVACAAELGLSSGM).

The protein belongs to the UbiA prenyltransferase family. The cofactor is Mg(2+).

Its subcellular location is the membrane. It catalyses the reaction triacetate lactone + (2E,6E,10E)-geranylgeranyl diphosphate = (2E,6E,10E)-geranylgeranyl-triacetate lactone + diphosphate. It participates in secondary metabolite biosynthesis; terpenoid biosynthesis. Polyprenyl transferase; part of the gene cluster that mediates the biosynthesis of meroterpenoids called sartorypyrones. Within the pathway, spyF catalyzes the prenylation of triacetic acid lactone (TAL) to produce geranylgeranyl-triacetate lactone. The biosynthesis of sartorypyrones begins with the production of triacetic acid lactone (TAL) by the NR-PKS spyA using one molecule of acetyl-CoA and two molecules of malonyl-CoA. The prenyltransferase spyF then conjugates geranylgeranyl pyrophosphate (GGPP) to TAL to form geranylgeranyl-triacetate lactone, for which the pathway-specific geranylgeranyl pyrophosphate synthase (GGPS) spyE is required to provide GGPP. Subsequently, geranylgeranyl-triacetate lactone is epoxidized at the terminal olein by the FAD-dependent monooxygenase spyC, followed by cyclization of the terpenoid component catalyzed by the terpene cyclase spyD to produce both the bicyclic sartorypyrone F and the monocyclic sartorypyrone D. Finally, the last step of the biosynthesis involves the acetylation of the meroterpenoids sartorypyrones D and F by the acetyltransferase SpyB to produce sartorypyrones A and G, respectively. In Aspergillus fumigatus (strain ATCC MYA-4609 / CBS 101355 / FGSC A1100 / Af293) (Neosartorya fumigata), this protein is Polyprenyl transferase spyF.